Here is a 222-residue protein sequence, read N- to C-terminus: N-acetyltransferase 8 (222 aa).

Residues 1 to 35 (MASFHIRQFQERDYEQVVDMFSRGMKEHIPTAFRH) lie on the Cytoplasmic side of the membrane. The chain crosses the membrane as a helical; Signal-anchor for type II membrane protein span at residues 36–56 (LLLLPRTLLLLLGVPLALVLV). Residues 57–222 (SGSWLLAVVC…IHFIYPLPSS (166 aa)) lie on the Lumenal side of the membrane. Residues 62–217 (LAVVCIFFLL…VDVSLIHFIY (156 aa)) enclose the N-acetyltransferase domain.

Belongs to the NAT8 family.

Its subcellular location is the endoplasmic reticulum-Golgi intermediate compartment membrane. The protein resides in the endoplasmic reticulum membrane. The enzyme catalyses L-lysyl-[protein] + acetyl-CoA = N(6)-acetyl-L-lysyl-[protein] + CoA + H(+). It catalyses the reaction an S-substituted L-cysteine + acetyl-CoA = an N-acetyl-L-cysteine-S-conjugate + CoA + H(+). The protein operates within sulfur metabolism; glutathione metabolism. Its function is as follows. Endoplasmic reticulum-membrane(ER)-bound lysine N-acetyltransferase catalyzing the N6-acetylation of lysine residues in the lumen of the ER in various proteins, including PROM1 and BACE1, using acetyl-CoA as acetyl donor. Thereby, may regulate apoptosis through the acetylation and the regulation of the expression of PROM1. May also regulate amyloid beta-peptide secretion through acetylation of BACE1 and the regulation of its expression in neurons. N(6)-lysine acetylation in the ER maintains protein homeostasis and regulates reticulophagy. Alternatively, acetylates the free alpha-amino group of cysteine S-conjugates to form mercapturic acids. This is the final step in a major route for detoxification of a wide variety of reactive electrophiles which starts with their incorporation into glutathione S-conjugates. The glutathione S-conjugates are then further processed into cysteine S-conjugates and finally mercapturic acids which are water soluble and can be readily excreted in urine or bile. The chain is N-acetyltransferase 8 (Nat8) from Rattus norvegicus (Rat).